Reading from the N-terminus, the 220-residue chain is Charged multivesicular body protein 3 (220 aa).

The N-myristoyl glycine moiety is linked to residue Gly2. A coiled-coil region spans residues 22–54 (KIRKEMRVIDRQIRDIQREQEKVKRSIKESAKK). An important for autoinhibitory function region spans residues 168 to 169 (IL). Positions 196-220 (AMAASDEEEEEDLEAMQSRLAALRS) are disordered. Positions 197-220 (MAASDEEEEEDLEAMQSRLAALRS) form a coiled coil. Residues 200–209 (SDEEEEEDLE) are compositionally biased toward acidic residues. Residues 201-209 (DEEEEEDLE) carry the MIT-interacting motif motif. 2 interaction with STAMBP regions span residues 203-207 (EEEED) and 219-220 (RS).

Belongs to the SNF7 family. In terms of assembly, probable core component of the endosomal sorting required for transport complex III (ESCRT-III). ESCRT-III components are thought to multimerize to form a flat lattice on the perimeter membrane of the endosome. Several assembly forms of ESCRT-III may exist that interact and act sequentially.

It localises to the cytoplasm. The protein resides in the cytosol. The protein localises to the membrane. It is found in the endosome. Its subcellular location is the late endosome membrane. Probable core component of the endosomal sorting required for transport complex III (ESCRT-III) which is involved in multivesicular bodies (MVBs) formation and sorting of endosomal cargo proteins into MVBs. MVBs contain intraluminal vesicles (ILVs) that are generated by invagination and scission from the limiting membrane of the endosome and mostly are delivered to lysosomes enabling degradation of membrane proteins, such as stimulated growth factor receptors, lysosomal enzymes and lipids. Involved in late stages of cytokinesis. Plays a role in endosomal sorting/trafficking of EGF receptor. This chain is Charged multivesicular body protein 3 (chmp3), found in Xenopus tropicalis (Western clawed frog).